Reading from the N-terminus, the 267-residue chain is Large ribosomal subunit protein bL9m (267 aa).

A mitochondrion-targeting transit peptide spans M1 to G52.

It belongs to the bacterial ribosomal protein bL9 family. Component of the mitochondrial large ribosomal subunit (mt-LSU). Mature mammalian 55S mitochondrial ribosomes consist of a small (28S) and a large (39S) subunit. The 28S small subunit contains a 12S ribosomal RNA (12S mt-rRNA) and 30 different proteins. The 39S large subunit contains a 16S rRNA (16S mt-rRNA), a copy of mitochondrial valine transfer RNA (mt-tRNA(Val)), which plays an integral structural role, and 52 different proteins.

The protein localises to the mitochondrion. This chain is Large ribosomal subunit protein bL9m (MRPL9), found in Homo sapiens (Human).